The sequence spans 155 residues: Endoribonuclease YbeY (155 aa).

Positions 120, 124, and 130 each coordinate Zn(2+).

This sequence belongs to the endoribonuclease YbeY family. The cofactor is Zn(2+).

The protein localises to the cytoplasm. In terms of biological role, single strand-specific metallo-endoribonuclease involved in late-stage 70S ribosome quality control and in maturation of the 3' terminus of the 16S rRNA. This is Endoribonuclease YbeY from Borreliella burgdorferi (strain ATCC 35210 / DSM 4680 / CIP 102532 / B31) (Borrelia burgdorferi).